The primary structure comprises 220 residues: Putative O-methyltransferase Mmcs_3995 (220 aa).

S-adenosyl-L-methionine-binding positions include Val47, Glu69, 71 to 72 (GT), Ser77, Asp95, and Val96. Asp143 contributes to the substrate binding site. Asp145 provides a ligand contact to S-adenosyl-L-methionine.

This sequence belongs to the class I-like SAM-binding methyltransferase superfamily. Cation-dependent O-methyltransferase family.

The sequence is that of Putative O-methyltransferase Mmcs_3995 from Mycobacterium sp. (strain MCS).